We begin with the raw amino-acid sequence, 411 residues long: Signal-transducing adaptor protein 2 (411 aa).

The PH domain occupies H20–R120. Y22 is modified (phosphotyrosine). Residues W152–E248 form the SH2 domain. Y250 bears the Phosphotyrosine; by PTK6 mark. Residues V291 to T320 are disordered. Y318 and Y330 each carry phosphotyrosine. The disordered stretch occupies residues S338–K364. Residues T390 to E410 adopt a coiled-coil conformation.

Interacts with PTK6 and CSF1R. In terms of processing, phosphorylated on tyrosine. Phosphorylated by PTK6 at Tyr-250 modulates PTK6-mediated STAT3 activation. Widely expressed.

The protein resides in the cytoplasm. It localises to the membrane. Substrate of protein kinase PTK6. May play a regulatory role in the acute-phase response in systemic inflammation and may modulate STAT3 activity. This is Signal-transducing adaptor protein 2 (Stap2) from Mus musculus (Mouse).